A 127-amino-acid chain; its full sequence is Small ribosomal subunit protein uS11c (127 aa).

It belongs to the universal ribosomal protein uS11 family. In terms of assembly, part of the 30S ribosomal subunit.

The protein localises to the plastid. Its subcellular location is the chloroplast. In Heterosigma akashiwo (strain NIES-293 / 8280G21-1), this protein is Small ribosomal subunit protein uS11c.